The primary structure comprises 722 residues: Polyribonucleotide nucleotidyltransferase (722 aa).

The Mg(2+) site is built by Asp-495 and Asp-501. The 60-residue stretch at 561–620 (PRLYVMKINPEKIREVIGKGGETIRSITKDTGCEINIEEDGTITIASVSSEGAEAAKKRI) folds into the KH domain. Residues 630–700 (GKVYEGTVVK…DRGRIRLSIK (71 aa)) enclose the S1 motif domain.

This sequence belongs to the polyribonucleotide nucleotidyltransferase family. It depends on Mg(2+) as a cofactor.

It is found in the cytoplasm. It catalyses the reaction RNA(n+1) + phosphate = RNA(n) + a ribonucleoside 5'-diphosphate. In terms of biological role, involved in mRNA degradation. Catalyzes the phosphorolysis of single-stranded polyribonucleotides processively in the 3'- to 5'-direction. The chain is Polyribonucleotide nucleotidyltransferase from Chromobacterium violaceum (strain ATCC 12472 / DSM 30191 / JCM 1249 / CCUG 213 / NBRC 12614 / NCIMB 9131 / NCTC 9757 / MK).